The chain runs to 623 residues: Sphingomyelinase C 2 (623 aa).

The signal sequence occupies residues 1–25 (MINKITKPKLLIGYYLLLFSLIRCL). Composition is skewed to low complexity over residues 51–61 (VNSVSINNDPA) and 67–80 (NPASANNNQVNAVP). A disordered region spans residues 51–121 (VNSVSINNDP…DPNPANLASA (71 aa)). The span at 89-102 (NPVNPASANSNQVN) shows a compositional bias: polar residues. Low complexity predominate over residues 110–121 (PADPNPANLASA).

Its subcellular location is the secreted. It carries out the reaction a sphingomyelin + H2O = phosphocholine + an N-acylsphing-4-enine + H(+). This chain is Sphingomyelinase C 2 (sph2), found in Leptospira interrogans serogroup Icterohaemorrhagiae serovar Lai (strain 56601).